The sequence spans 316 residues: Glutathione synthetase (316 aa).

Residues 125-310 (KLFTAWFSDL…ITGMLMDAIE (186 aa)) enclose the ATP-grasp domain. 151–207 (WEKHSDIILKPLDGMGGASIFRVKEGDPNLGVIAETLTEHGTRYCMAQNYLPAIKDG) is a binding site for ATP. Residues Glu281 and Asn283 each coordinate Mg(2+).

Belongs to the prokaryotic GSH synthase family. The cofactor is Mg(2+). Mn(2+) is required as a cofactor.

The catalysed reaction is gamma-L-glutamyl-L-cysteine + glycine + ATP = glutathione + ADP + phosphate + H(+). It functions in the pathway sulfur metabolism; glutathione biosynthesis; glutathione from L-cysteine and L-glutamate: step 2/2. The protein is Glutathione synthetase of Escherichia coli O6:H1 (strain CFT073 / ATCC 700928 / UPEC).